The primary structure comprises 396 residues: Probable tRNA sulfurtransferase (396 aa).

One can recognise a THUMP domain in the interval 63–166 (AAAARASARV…GRRAYFFDTI (104 aa)). Residues 184 to 185 (LY), Arg266, Gly288, and Gln297 each bind ATP.

Belongs to the ThiI family.

It is found in the cytoplasm. It catalyses the reaction [ThiI sulfur-carrier protein]-S-sulfanyl-L-cysteine + a uridine in tRNA + 2 reduced [2Fe-2S]-[ferredoxin] + ATP + H(+) = [ThiI sulfur-carrier protein]-L-cysteine + a 4-thiouridine in tRNA + 2 oxidized [2Fe-2S]-[ferredoxin] + AMP + diphosphate. It carries out the reaction [ThiS sulfur-carrier protein]-C-terminal Gly-Gly-AMP + S-sulfanyl-L-cysteinyl-[cysteine desulfurase] + AH2 = [ThiS sulfur-carrier protein]-C-terminal-Gly-aminoethanethioate + L-cysteinyl-[cysteine desulfurase] + A + AMP + 2 H(+). The protein operates within cofactor biosynthesis; thiamine diphosphate biosynthesis. In terms of biological role, catalyzes the ATP-dependent transfer of a sulfur to tRNA to produce 4-thiouridine in position 8 of tRNAs, which functions as a near-UV photosensor. Also catalyzes the transfer of sulfur to the sulfur carrier protein ThiS, forming ThiS-thiocarboxylate. This is a step in the synthesis of thiazole, in the thiamine biosynthesis pathway. The sulfur is donated as persulfide by IscS. The sequence is that of Probable tRNA sulfurtransferase from Aeropyrum pernix (strain ATCC 700893 / DSM 11879 / JCM 9820 / NBRC 100138 / K1).